A 582-amino-acid chain; its full sequence is ATP-dependent lipid A-core flippase (582 aa).

A run of 5 helical transmembrane segments spans residues 16-36, 63-83, 153-173, 253-273, and 275-295; these read LWPM…ALIL, ILVW…VSGF, IIGL…ILVV, PLIQ…ASFP, and VMET…IALM. An ABC transmembrane type-1 domain is found at 28–310; sequence IVAAIALILN…LTNVNAQFQR (283 aa). The region spanning 342-578 is the ABC transporter domain; it reads IAFDHVTFSY…QGVYAQLHQL (237 aa). 376 to 383 contacts ATP; the sequence is GRSGSGKS.

It belongs to the ABC transporter superfamily. Lipid exporter (TC 3.A.1.106) family. In terms of assembly, homodimer.

It localises to the cell inner membrane. The catalysed reaction is ATP + H2O + lipid A-core oligosaccharideSide 1 = ADP + phosphate + lipid A-core oligosaccharideSide 2.. In terms of biological role, involved in lipopolysaccharide (LPS) biosynthesis. Translocates lipid A-core from the inner to the outer leaflet of the inner membrane. Transmembrane domains (TMD) form a pore in the inner membrane and the ATP-binding domain (NBD) is responsible for energy generation. The polypeptide is ATP-dependent lipid A-core flippase (Sodalis glossinidius (strain morsitans)).